Consider the following 201-residue polypeptide: Holliday junction resolvase RecU (201 aa).

Mg(2+) contacts are provided by Thr87, Asp89, Glu102, and Gln121.

This sequence belongs to the RecU family. It depends on Mg(2+) as a cofactor.

It localises to the cytoplasm. The catalysed reaction is Endonucleolytic cleavage at a junction such as a reciprocal single-stranded crossover between two homologous DNA duplexes (Holliday junction).. Its function is as follows. Endonuclease that resolves Holliday junction intermediates in genetic recombination. Cleaves mobile four-strand junctions by introducing symmetrical nicks in paired strands. Promotes annealing of linear ssDNA with homologous dsDNA. Required for DNA repair, homologous recombination and chromosome segregation. The chain is Holliday junction resolvase RecU from Listeria welshimeri serovar 6b (strain ATCC 35897 / DSM 20650 / CCUG 15529 / CIP 8149 / NCTC 11857 / SLCC 5334 / V8).